The sequence spans 162 residues: Urease accessory protein UreE 1 (162 aa).

Residues 143–162 (SGGHQHHHGHDHDHHHPDHE) form a disordered region. The segment covering 152–162 (HDHDHHHPDHE) has biased composition (basic and acidic residues).

The protein belongs to the UreE family.

It localises to the cytoplasm. In terms of biological role, involved in urease metallocenter assembly. Binds nickel. Probably functions as a nickel donor during metallocenter assembly. This Brucella suis biovar 1 (strain 1330) protein is Urease accessory protein UreE 1.